The primary structure comprises 118 residues: Ribosome-binding factor A (118 aa).

The protein belongs to the RbfA family. As to quaternary structure, monomer. Binds 30S ribosomal subunits, but not 50S ribosomal subunits or 70S ribosomes.

It localises to the cytoplasm. Its function is as follows. One of several proteins that assist in the late maturation steps of the functional core of the 30S ribosomal subunit. Associates with free 30S ribosomal subunits (but not with 30S subunits that are part of 70S ribosomes or polysomes). Required for efficient processing of 16S rRNA. May interact with the 5'-terminal helix region of 16S rRNA. The polypeptide is Ribosome-binding factor A (Clostridium beijerinckii (strain ATCC 51743 / NCIMB 8052) (Clostridium acetobutylicum)).